A 196-amino-acid polypeptide reads, in one-letter code: Putative 3-methyladenine DNA glycosylase (196 aa).

The protein belongs to the DNA glycosylase MPG family.

This is Putative 3-methyladenine DNA glycosylase from Bacillus licheniformis (strain ATCC 14580 / DSM 13 / JCM 2505 / CCUG 7422 / NBRC 12200 / NCIMB 9375 / NCTC 10341 / NRRL NRS-1264 / Gibson 46).